The chain runs to 477 residues: MAGKTLYDKLWEAHEVKRRDDGSSLIYIDRHIIHEVTSPQAFEGLRLANRKPWRIDANIATPDHNVPTTPERKGGIEAIVDQVSRLQVQTLDENCDEYGIVEFKMNDERQGIVHVISPEQGATLPGMTVVCGDSHTSTHGAFGALAHGIGTSEVEHVLATQCLVAKKMKNMLVRVEGQLPAGVTAKDIVLAVIGKIGTAGGNGHAMEFAGSAIRELSMEGRMTICNMSIEAGARVGLVATDATTVAYVEGRPYAPKGEQWKQAVESWKDLVSDDDAVFDTVVELDASQIKPQVSWGTSPEMVLAVDQRVPDPAAETDLVKRGSIERALKYMGLTANQAITDIKLDRVFIGSCTNSRIEDLRAAAEIAKGRKVAASVKQAIVVPGSGLVKAQAEREGLDKIFLEAGFEWREPGCSMCLAMNPDRLESGEHCASTSNRNFEGRQGAGGRTHLVSPAMAAAAAVAGHFIDVRELIQGSAA.

Residues Cys-352, Cys-413, and Cys-416 each contribute to the [4Fe-4S] cluster site.

This sequence belongs to the aconitase/IPM isomerase family. LeuC type 1 subfamily. In terms of assembly, heterodimer of LeuC and LeuD. [4Fe-4S] cluster is required as a cofactor.

The catalysed reaction is (2R,3S)-3-isopropylmalate = (2S)-2-isopropylmalate. The protein operates within amino-acid biosynthesis; L-leucine biosynthesis; L-leucine from 3-methyl-2-oxobutanoate: step 2/4. Functionally, catalyzes the isomerization between 2-isopropylmalate and 3-isopropylmalate, via the formation of 2-isopropylmaleate. This Pseudomonas putida (strain ATCC 47054 / DSM 6125 / CFBP 8728 / NCIMB 11950 / KT2440) protein is 3-isopropylmalate dehydratase large subunit.